The primary structure comprises 233 residues: Large ribosomal subunit protein uL1 (233 aa).

Belongs to the universal ribosomal protein uL1 family. In terms of assembly, part of the 50S ribosomal subunit.

Functionally, binds directly to 23S rRNA. The L1 stalk is quite mobile in the ribosome, and is involved in E site tRNA release. Its function is as follows. Protein L1 is also a translational repressor protein, it controls the translation of the L11 operon by binding to its mRNA. This Aeromonas salmonicida (strain A449) protein is Large ribosomal subunit protein uL1.